The primary structure comprises 466 residues: Phytase A (466 aa).

The first 19 residues, methionine 1–glycine 19, serve as a signal peptide directing secretion. An N-linked (GlcNAc...) asparagine glycan is attached at asparagine 27. A disulfide bridge links cysteine 31 with cysteine 40. Tyrosine 51, arginine 81, histidine 82, arginine 85, and threonine 88 together coordinate 1D-myo-inositol hexakisphosphate. 4 disulfides stabilise this stretch: cysteine 71-cysteine 414, cysteine 215-cysteine 465, cysteine 264-cysteine 282, and cysteine 436-cysteine 444. Residue histidine 82 is the Nucleophile of the active site. N-linked (GlcNAc...) asparagine glycosylation is found at asparagine 105 and asparagine 120. Arginine 165 provides a ligand contact to 1D-myo-inositol hexakisphosphate. Residues asparagine 207 and asparagine 230 are each glycosylated (N-linked (GlcNAc...) asparagine). Lysine 301 serves as a coordination point for 1D-myo-inositol hexakisphosphate. N-linked (GlcNAc...) asparagine glycans are attached at residues asparagine 339 and asparagine 352. Histidine 361 and aspartate 362 together coordinate 1D-myo-inositol hexakisphosphate. N-linked (GlcNAc...) asparagine glycosylation is present at asparagine 376.

Belongs to the histidine acid phosphatase family. Monomer.

It localises to the secreted. The enzyme catalyses 1D-myo-inositol hexakisphosphate + H2O = 1D-myo-inositol 1,2,4,5,6-pentakisphosphate + phosphate. It carries out the reaction 1D-myo-inositol 1,2,4,5,6-pentakisphosphate + H2O = 1D-myo-inositol 1,2,5,6-tetrakisphosphate + phosphate. The catalysed reaction is 1D-myo-inositol 1,2,5,6-tetrakisphosphate + H2O = 1D-myo-inositol 1,2,6-trisphosphate + phosphate. It catalyses the reaction 1D-myo-inositol 1,2,6-trisphosphate + H2O = 1D-myo-inositol 1,2-bisphosphate + phosphate. The enzyme catalyses 1D-myo-inositol 1,2-bisphosphate + H2O = 1D-myo-inositol 2-phosphate + phosphate. Catalyzes the phosphate monoester hydrolysis of phytic acid (myo-inositol hexakisphosphate), which results in the stepwise formation of myo-inositol pentakis-, tetrakis-, tris-, bis-, and monophosphates, as well as the liberation of inorganic phosphate. Myo-inositol 2-monophosphate is the end product. Has a broad substrate specificity and is also able to dephosphorylate other classic acid phosphatase substrates such as p-nitrophenyl phosphate, phenyl phosphate, fructose 1,6-bisphosphate, glucose 6-phosphate, 3-phosphoglycerate, as well as ADP and ATP. This chain is Phytase A, found in Aspergillus terreus.